We begin with the raw amino-acid sequence, 83 residues long: Small ribosomal subunit protein bS16 (83 aa).

This sequence belongs to the bacterial ribosomal protein bS16 family.

This chain is Small ribosomal subunit protein bS16, found in Borrelia hermsii (strain HS1 / DAH).